The primary structure comprises 249 residues: Granaticin polyketide synthase putative ketoacyl reductase 2 (249 aa).

12–36 (LVTGSSSGIGQTVAQRLAAEGYRVV) serves as a coordination point for NAD(+). Ser144 contacts substrate. Catalysis depends on Tyr157, which acts as the Proton acceptor.

This sequence belongs to the short-chain dehydrogenases/reductases (SDR) family.

It participates in antibiotic biosynthesis; granaticin biosynthesis. This chain is Granaticin polyketide synthase putative ketoacyl reductase 2 (gra-orf6), found in Streptomyces violaceoruber.